The following is a 349-amino-acid chain: Ferredoxin--NADP reductase 1 (349 aa).

Residues glutamate 36, lysine 44, tyrosine 48, valine 88, leucine 123, aspartate 290, and serine 331 each contribute to the FAD site.

Belongs to the ferredoxin--NADP reductase type 2 family. As to quaternary structure, homodimer. FAD is required as a cofactor.

It catalyses the reaction 2 reduced [2Fe-2S]-[ferredoxin] + NADP(+) + H(+) = 2 oxidized [2Fe-2S]-[ferredoxin] + NADPH. In Bacillus cytotoxicus (strain DSM 22905 / CIP 110041 / 391-98 / NVH 391-98), this protein is Ferredoxin--NADP reductase 1.